The primary structure comprises 268 residues: Type II methyltransferase M2.DpnII (268 aa).

This sequence belongs to the N(4)/N(6)-methyltransferase family. In terms of assembly, homodimer.

It carries out the reaction a 2'-deoxyadenosine in DNA + S-adenosyl-L-methionine = an N(6)-methyl-2'-deoxyadenosine in DNA + S-adenosyl-L-homocysteine + H(+). Functionally, a beta subtype methylase that recognizes the single- or double-stranded sequence 5'-GATC-3', methylates A-2 on one or both strands (respectively), and protects the DNA from cleavage by the DpnII endonuclease. Further methylates DNA that is already methylated at 5'-GATC-3' sites. Essential for establishment of a previously unmethylated plasmid transformed into the cell as single-stranded DNA, enhances plasmid transfer to DpnII-containing strains of Streptococcus pneumoniae. This is Type II methyltransferase M2.DpnII from Streptococcus pneumoniae.